We begin with the raw amino-acid sequence, 440 residues long: Tol-Pal system protein TolB (440 aa).

A signal peptide spans 1 to 21 (MKIFGKWLLVTLLICSMPVKA).

Belongs to the TolB family. In terms of assembly, the Tol-Pal system is composed of five core proteins: the inner membrane proteins TolA, TolQ and TolR, the periplasmic protein TolB and the outer membrane protein Pal. They form a network linking the inner and outer membranes and the peptidoglycan layer.

The protein localises to the periplasm. Its function is as follows. Part of the Tol-Pal system, which plays a role in outer membrane invagination during cell division and is important for maintaining outer membrane integrity. The sequence is that of Tol-Pal system protein TolB from Shewanella halifaxensis (strain HAW-EB4).